A 29-amino-acid polypeptide reads, in one-letter code: Lambda-theraphotoxin-Ec2a (29 aa).

Cystine bridges form between cysteine 2–cysteine 16, cysteine 9–cysteine 21, and cysteine 15–cysteine 25.

This sequence belongs to the neurotoxin 30 (phrixotoxin) family. As to expression, expressed by the venom gland.

The protein resides in the secreted. In terms of biological role, insect-selective neurotoxin that potently blocks insect calcium-activated potassium (BKCa) channels (Slo-type) in cockroach dorsal unpaired median (DUM) neurons (IC(50)=3.7 nM). This occurs in the absence of any shifts in the voltage dependence of activation. At high concentrations (330 nM), it partially inhibits cockroach delayed-rectifier potassium channels (Kv) currents. May interact with the turret and/or loop region of the external entrance to the channel and does not project deeply into the pore of the channel. In vivo, does not show toxicity in mice after intracerebroventricular injection of up to 25 pmol/g (1.8 ug/20 g mouse). This Eucratoscelus constrictus (African red-rump baboon spider) protein is Lambda-theraphotoxin-Ec2a.